Reading from the N-terminus, the 106-residue chain is Large ribosomal subunit protein uL24 (106 aa).

This sequence belongs to the universal ribosomal protein uL24 family. Part of the 50S ribosomal subunit.

Functionally, one of two assembly initiator proteins, it binds directly to the 5'-end of the 23S rRNA, where it nucleates assembly of the 50S subunit. In terms of biological role, one of the proteins that surrounds the polypeptide exit tunnel on the outside of the subunit. This chain is Large ribosomal subunit protein uL24, found in Alkalilimnicola ehrlichii (strain ATCC BAA-1101 / DSM 17681 / MLHE-1).